A 131-amino-acid chain; its full sequence is Small capsomere-interacting protein (131 aa).

The protein belongs to the herpesviridae small capsomere-interacting protein family. In terms of assembly, interacts with the major capsid protein/MCP.

The protein resides in the virion. It localises to the host nucleus. Functionally, participates in the assembly of the infectious particles by decorating the outer surface of the capsid shell and thus forming a layer between the capsid and the tegument. Complexes composed of the major capsid protein and small capsomere-interacting protein/SCP assemble together in the host cytoplasm and are translocated to the nucleus, where they accumulate and participate in capsid assembly. This is Small capsomere-interacting protein from Gallus gallus (Chicken).